Here is a 361-residue protein sequence, read N- to C-terminus: S-adenosylmethionine:tRNA ribosyltransferase-isomerase (361 aa).

This sequence belongs to the QueA family. In terms of assembly, monomer.

It localises to the cytoplasm. It carries out the reaction 7-aminomethyl-7-carbaguanosine(34) in tRNA + S-adenosyl-L-methionine = epoxyqueuosine(34) in tRNA + adenine + L-methionine + 2 H(+). It functions in the pathway tRNA modification; tRNA-queuosine biosynthesis. Functionally, transfers and isomerizes the ribose moiety from AdoMet to the 7-aminomethyl group of 7-deazaguanine (preQ1-tRNA) to give epoxyqueuosine (oQ-tRNA). This chain is S-adenosylmethionine:tRNA ribosyltransferase-isomerase, found in Glaesserella parasuis serovar 5 (strain SH0165) (Haemophilus parasuis).